Consider the following 971-residue polypeptide: uncharacterized protein (971 aa).

This is an uncharacterized protein from Borreliella burgdorferi (strain ATCC 35210 / DSM 4680 / CIP 102532 / B31) (Borrelia burgdorferi).